We begin with the raw amino-acid sequence, 305 residues long: UDP-3-O-acyl-N-acetylglucosamine deacetylase (305 aa).

Zn(2+) contacts are provided by histidine 79, histidine 238, and aspartate 242. The Proton donor role is filled by histidine 265.

It belongs to the LpxC family. Zn(2+) is required as a cofactor.

The enzyme catalyses a UDP-3-O-[(3R)-3-hydroxyacyl]-N-acetyl-alpha-D-glucosamine + H2O = a UDP-3-O-[(3R)-3-hydroxyacyl]-alpha-D-glucosamine + acetate. Its pathway is glycolipid biosynthesis; lipid IV(A) biosynthesis; lipid IV(A) from (3R)-3-hydroxytetradecanoyl-[acyl-carrier-protein] and UDP-N-acetyl-alpha-D-glucosamine: step 2/6. Functionally, catalyzes the hydrolysis of UDP-3-O-myristoyl-N-acetylglucosamine to form UDP-3-O-myristoylglucosamine and acetate, the committed step in lipid A biosynthesis. This is UDP-3-O-acyl-N-acetylglucosamine deacetylase from Vibrio parahaemolyticus serotype O3:K6 (strain RIMD 2210633).